The following is a 367-amino-acid chain: Protein NDRG4-B (367 aa).

Residues 1-12 (MSELRFPEEKPL) show a composition bias toward basic and acidic residues. Disordered stretches follow at residues 1–21 (MSEL…TEME) and 333–367 (LTSA…EVSC). Over residues 347–367 (CTQSESSDGIGQINHTMEVSC) the composition is skewed to polar residues.

The protein belongs to the NDRG family.

Its subcellular location is the cytoplasm. It is found in the cytosol. In terms of biological role, contributes to the maintenance of intracerebral BDNF levels within the normal range. May enhance growth factor-induced ERK1 and ERK2 phosphorylation. May attenuate growth factor-promoted ELK1 phosphorylation in a microtubule-dependent manner. The sequence is that of Protein NDRG4-B (ndrg4-b) from Xenopus laevis (African clawed frog).